A 98-amino-acid polypeptide reads, in one-letter code: Integration host factor subunit beta (98 aa).

The interval 59 to 98 (RTGRNPKTGESVTLPGKYVPHFKPGKEMRDRVNESIQSEG) is disordered. Residues 82–91 (PGKEMRDRVN) are compositionally biased toward basic and acidic residues.

Belongs to the bacterial histone-like protein family. Heterodimer of an alpha and a beta chain.

Its function is as follows. This protein is one of the two subunits of integration host factor, a specific DNA-binding protein that functions in genetic recombination as well as in transcriptional and translational control. The protein is Integration host factor subunit beta of Saccharophagus degradans (strain 2-40 / ATCC 43961 / DSM 17024).